The following is a 390-amino-acid chain: Cystathionine beta-lyase (390 aa).

At K202 the chain carries N6-(pyridoxal phosphate)lysine.

This sequence belongs to the trans-sulfuration enzymes family. Pyridoxal 5'-phosphate is required as a cofactor.

The protein resides in the cytoplasm. The protein localises to the nucleus. It catalyses the reaction L,L-cystathionine + H2O = L-homocysteine + pyruvate + NH4(+). The catalysed reaction is an S-substituted L-cysteine + H2O = a thiol + pyruvate + NH4(+). The protein operates within amino-acid biosynthesis; L-methionine biosynthesis via de novo pathway; L-homocysteine from L-cystathionine: step 1/1. The polypeptide is Cystathionine beta-lyase (str3) (Schizosaccharomyces pombe (strain 972 / ATCC 24843) (Fission yeast)).